A 566-amino-acid chain; its full sequence is E3 ubiquitin-protein ligase RNF220 (566 aa).

Lysine 277 is covalently cross-linked (Glycyl lysine isopeptide (Lys-Gly) (interchain with G-Cter in SUMO2)). Residues 277 to 297 (KREGESPTASPHSSATDDLHH) are disordered. Residue serine 390 is modified to Phosphoserine. Positions 485–513 (EDSAVTTFEALKARVRELERQLSRGDRYK) form a coiled coil. Residues 514–522 (CLICMDSYS) form a required for targeting to the cytoplasm region. Residues 514–553 (CLICMDSYSMPLTSIQCWHVHCEECWLRTLGAKKLCPQCY) form an RING-type zinc finger.

In terms of assembly, interacts with SIN3B. Interacts with CTNNB1 (via Armadillo repeats 2-8). Interacts with USP7 (via MATH domain). In terms of processing, auto-ubiquitinated; leads to proteasomal degradation.

It is found in the cytoplasm. The catalysed reaction is S-ubiquitinyl-[E2 ubiquitin-conjugating enzyme]-L-cysteine + [acceptor protein]-L-lysine = [E2 ubiquitin-conjugating enzyme]-L-cysteine + N(6)-ubiquitinyl-[acceptor protein]-L-lysine.. It participates in protein modification; protein ubiquitination. Functionally, E3 ubiquitin-protein ligase that promotes the ubiquitination and proteasomal degradation of SIN3B. Independently of its E3 ligase activity, acts as a CTNNB1 stabilizer through USP7-mediated deubiquitination of CTNNB1 promoting Wnt signaling. The sequence is that of E3 ubiquitin-protein ligase RNF220 (RNF220) from Bos taurus (Bovine).